A 366-amino-acid polypeptide reads, in one-letter code: Lysophosphatidic acid receptor 1-B (366 aa).

Residues 1–52 (MTSLSEFVSEPIGMMSQTSAASESQCYYNETIAFFYNRSGKYLDTEWNAVSK) lie on the Extracellular side of the membrane. Intrachain disulfides connect C26-C192 and C190-C197. 2 N-linked (GlcNAc...) asparagine glycosylation sites follow: N29 and N37. K41 contributes to the a 1-acyl-sn-glycero-3-phosphate binding site. The chain crosses the membrane as a helical span at residues 53-77 (LVMGLGITVCIFIMLANLLVMVAIY). The Cytoplasmic segment spans residues 78 to 85 (VNRRFHFP). A helical transmembrane segment spans residues 86–109 (IYYLMANLAAADFFAGLAYFYLMF). Residues 110 to 123 (NTGPNTRRLTVSTW) lie on the Extracellular side of the membrane. Residues 124–146 (LLRQGLIDTSLTASVANLLAIAI) form a helical membrane-spanning segment. A 1-acyl-sn-glycero-3-phosphate is bound at residue 126–131 (RQGLID). The Cytoplasmic portion of the chain corresponds to 147–165 (ERHITVFRMQLHTRMSNRR). The chain crosses the membrane as a helical span at residues 166–186 (VVVVIVVIWTVAIVMGAIPSV). At 187–206 (GWNCICDLEHCSNMAPLYSD) the chain is on the extracellular side. A helical membrane pass occupies residues 207–227 (SYLIFWTIFNLVTFVVMVVLY). W212 lines the a 1-acyl-sn-glycero-3-phosphate pocket. Topologically, residues 228 to 257 (AHIFVYVRQRTMRMSRHSSGPRRNRDTMMS) are cytoplasmic. The chain crosses the membrane as a helical span at residues 258 to 282 (LLKTVVIVLGAFIVCWTPGLVLLLL). Residues 283-296 (DVCCPQCNILAYEK) lie on the Extracellular side of the membrane. Cysteines 286 and 289 form a disulfide. The helical transmembrane segment at 297–317 (FFLLLAEFNSAMNPIIYSYRD) threads the bilayer. The Cytoplasmic portion of the chain corresponds to 318–366 (KEMSATFKQILCCQRTENVNGPTEGSDRSASSLNHTILAGVHSNDHSVV).

The protein belongs to the G-protein coupled receptor 1 family. Expressed at high levels in oocytes and at lower levels in brain and spinal cord. Below detection level in lung, heart, kidney, liver, muscle, stomach, and intestine.

It is found in the cell surface. The protein localises to the cell membrane. Its subcellular location is the endosome. In terms of biological role, receptor for lysophosphatidic acid (LPA). Plays a role in the reorganization of the actin cytoskeleton, cell migration, differentiation and proliferation, and thereby contributes to the responses to tissue damage and infectious agents. Activates downstream signaling cascades via the G(i)/G(o), G(12)/G(13), and G(q) families of heteromeric G proteins. Signaling inhibits adenylyl cyclase activity and decreases cellular cAMP levels. Signaling triggers an increase of cytoplasmic Ca(2+) levels. Signaling leads to the activation of phospholipase C (PLC) and the formation of inositol 1,4,5-trisphosphate. Signaling mediates activation of down-stream MAP kinases. Contributes to the regulation of cell shape. Promotes Rho-dependent reorganization of the actin cytoskeleton in neuronal cells and neurite retraction. Promotes the activation of Rho and the formation of actin stress fibers. Promotes formation of lamellipodia at the leading edge of migrating cells via activation of Rac. Through its function as lysophosphatidic acid receptor, plays a role in chemotaxis and cell migration, including responses to injury and wounding. Promotes cell proliferation in response to lysophosphatidic acid. The polypeptide is Lysophosphatidic acid receptor 1-B (lpar1-b) (Xenopus laevis (African clawed frog)).